The following is a 278-amino-acid chain: HTH-type transcriptional activator RhaS (278 aa).

The HTH araC/xylS-type domain maps to N174–G272. 2 consecutive DNA-binding regions (H-T-H motif) follow at residues D191–T212 and V239–F262.

As to quaternary structure, binds DNA as a dimer.

The protein resides in the cytoplasm. Its function is as follows. Activates expression of the rhaBAD and rhaT operons. This chain is HTH-type transcriptional activator RhaS, found in Escherichia coli (strain SMS-3-5 / SECEC).